The following is a 712-amino-acid chain: Ribosome-releasing factor 2, mitochondrial (712 aa).

The transit peptide at 1-29 (MLRCAWQNGPRQSNRWLRHLSNQIWKRSY) directs the protein to the mitochondrion. In terms of domain architecture, tr-type G spans 31–310 (SKIRNIGILA…AVNSYLPAPE (280 aa)). GTP is bound by residues 40-47 (AHIDAGKT), 104-108 (DTPGH), and 158-161 (NKMD).

Belongs to the TRAFAC class translation factor GTPase superfamily. Classic translation factor GTPase family. EF-G/EF-2 subfamily.

Its subcellular location is the mitochondrion. In terms of biological role, mitochondrial GTPase that mediates the disassembly of ribosomes from messenger RNA at the termination of mitochondrial protein biosynthesis. Not involved in the GTP-dependent ribosomal translocation step during translation elongation. The polypeptide is Ribosome-releasing factor 2, mitochondrial (Drosophila yakuba (Fruit fly)).